Here is a 744-residue protein sequence, read N- to C-terminus: Tripartite motif-containing protein 2 (744 aa).

Ser10 carries the post-translational modification Phosphoserine. Residues 23–64 (CSICLERYKNPKVLPCLHTFCERCLQNYIPAHSLTLSCPVCR) form an RING-type zinc finger. The B box-type zinc-finger motif lies at 113–154 (GKPLSCPNHDGNVMEFYCQSCETAMCRECTEGEHAEHPTVPL). Zn(2+) contacts are provided by Cys118, His121, Cys141, and His146. The stretch at 320-421 (TTNAVASETV…IRGSPFKLKV (102 aa)) is one Filamin repeat. Thr371 carries the post-translational modification Phosphothreonine. Phosphoserine occurs at positions 375, 424, and 428. The interval 432-462 (EGVKRRVKSPGSGHVKQKAVKRPASMYSTGK) is disordered. NHL repeat units follow at residues 473–516 (IFRV…FSND), 520–563 (KSRF…FSND), 564–605 (GKFK…FQPN), 609–652 (VTRF…FNQE), 656–699 (MLKF…FDGS), and 700–743 (GSFL…YRYL).

This sequence belongs to the TRIM/RBCC family. In terms of assembly, forms homooligomers. Interacts with TRIM3; this interaction reduces TRIM2 activity. Interacts with myosin V; myosin V may not be a substrate for ubiquitination. Interacts with NEFL. Interacts with phosphorylated BCL2L11. Interacts with SIRPA. In terms of processing, RING-type zinc finger-dependent and UBE2D1-dependent autoubiquitination. In terms of tissue distribution, highly expressed in the cerebellum, hippocampus, retina and spinal cord. In the cerebellum, strongest expression in Purkinje cells and in the deep cerebellar nuclei. In retina, high expression in the ganglionic cell layer, inner nuclear layer and inthe outer plexiform layer. Particularly high expression in the hippocampus, in pyramidal cells of CA1-CA3 hippocampal areas and ingranule cells of the dentate gyrus.

Its subcellular location is the cytoplasm. The enzyme catalyses S-ubiquitinyl-[E2 ubiquitin-conjugating enzyme]-L-cysteine + [acceptor protein]-L-lysine = [E2 ubiquitin-conjugating enzyme]-L-cysteine + N(6)-ubiquitinyl-[acceptor protein]-L-lysine.. It functions in the pathway protein modification; protein ubiquitination. Functionally, UBE2D1-dependent E3 ubiquitin-protein ligase that mediates the ubiquitination of NEFL and of phosphorylated BCL2L11. Plays a neuroprotective function. May play a role in neuronal rapid ischemic tolerance. Plays a role in antiviral immunity and limits new world arenavirus infection independently of its ubiquitin ligase activity by decreasing virus internalization. The sequence is that of Tripartite motif-containing protein 2 (Trim2) from Mus musculus (Mouse).